A 166-amino-acid polypeptide reads, in one-letter code: Large ribosomal subunit protein bL19 (166 aa).

The protein belongs to the bacterial ribosomal protein bL19 family.

Its function is as follows. This protein is located at the 30S-50S ribosomal subunit interface and may play a role in the structure and function of the aminoacyl-tRNA binding site. The protein is Large ribosomal subunit protein bL19 of Chelativorans sp. (strain BNC1).